The following is a 171-amino-acid chain: CASP-like protein 5A2 (171 aa).

Over 1–39 the chain is Cytoplasmic; sequence MDGSAHLRDPPGPAVLRWRLEDMHIIPGTSGSLALRICQ. A helical transmembrane segment spans residues 40 to 60; the sequence is FSAAIVSFSVMISAANFSSVT. A topological domain (extracellular) is located at residue Ala61. Residues 62 to 82 traverse the membrane as a helical segment; the sequence is FCFLVAAMVLQCMWSLSVATI. Residues 83–106 are Cytoplasmic-facing; it reads EGYAMLVGRSLRDSPLLSLFAVGD. A helical membrane pass occupies residues 107-127; that stretch reads WVTAVITFAGACASAGIAVLV. Residues 128–148 are Extracellular-facing; it reads GRDIHRGCDVNFCGRYAAAAG. The chain crosses the membrane as a helical span at residues 149 to 169; the sequence is MAFLSWLLISTSFLFTFWLLA. Residues 170–171 lie on the Cytoplasmic side of the membrane; sequence TR.

The protein belongs to the Casparian strip membrane proteins (CASP) family. In terms of assembly, homodimer and heterodimers.

Its subcellular location is the cell membrane. In Pteridium aquilinum subsp. aquilinum (Bracken fern), this protein is CASP-like protein 5A2.